The sequence spans 72 residues: Translation initiation factor IF-1 (72 aa).

The S1-like domain occupies Met1 to Lys72.

This sequence belongs to the IF-1 family. As to quaternary structure, component of the 30S ribosomal translation pre-initiation complex which assembles on the 30S ribosome in the order IF-2 and IF-3, IF-1 and N-formylmethionyl-tRNA(fMet); mRNA recruitment can occur at any time during PIC assembly.

The protein localises to the cytoplasm. Functionally, one of the essential components for the initiation of protein synthesis. Stabilizes the binding of IF-2 and IF-3 on the 30S subunit to which N-formylmethionyl-tRNA(fMet) subsequently binds. Helps modulate mRNA selection, yielding the 30S pre-initiation complex (PIC). Upon addition of the 50S ribosomal subunit IF-1, IF-2 and IF-3 are released leaving the mature 70S translation initiation complex. The sequence is that of Translation initiation factor IF-1 from Moorella thermoacetica (strain ATCC 39073 / JCM 9320).